The sequence spans 696 residues: Verrucotoxin subunit beta (696 aa).

Residues 506–696 (HMPGVETIKD…GCTTESQWSN (191 aa)) form the B30.2/SPRY domain.

It belongs to the SNTX/VTX toxin family. In terms of assembly, tetramer composed of 2 alpha and 2 beta subunits. In terms of processing, glycosylated. In terms of tissue distribution, expressed by the venom gland.

It is found in the secreted. This lethal (towards mice) toxin induces hemolytic, cytolytic and hypotensive activities. Inhibits calcium channels and may activate ATP-sensitive potassium channels in frog atrial heart muscle. In guinea-pig ventricular myocytes, it modulates calcium channel activity through the beta-adrenoceptor-cAMP-PKA pathway (ADRB). The chain is Verrucotoxin subunit beta from Synanceia verrucosa (Reef stonefish).